A 108-amino-acid chain; its full sequence is Nucleoid-associated protein Bpet3552 (108 aa).

Belongs to the YbaB/EbfC family. As to quaternary structure, homodimer.

The protein resides in the cytoplasm. It localises to the nucleoid. Its function is as follows. Binds to DNA and alters its conformation. May be involved in regulation of gene expression, nucleoid organization and DNA protection. This Bordetella petrii (strain ATCC BAA-461 / DSM 12804 / CCUG 43448) protein is Nucleoid-associated protein Bpet3552.